A 146-amino-acid chain; its full sequence is ATP synthase epsilon chain (146 aa).

The tract at residues 102 to 122 is disordered; it reads QSAKKRAEQHMQEAKEKHNER.

The protein belongs to the ATPase epsilon chain family. As to quaternary structure, F-type ATPases have 2 components, CF(1) - the catalytic core - and CF(0) - the membrane proton channel. CF(1) has five subunits: alpha(3), beta(3), gamma(1), delta(1), epsilon(1). CF(0) has three main subunits: a, b and c.

The protein resides in the cell membrane. Produces ATP from ADP in the presence of a proton gradient across the membrane. The chain is ATP synthase epsilon chain from Lactobacillus gasseri (strain ATCC 33323 / DSM 20243 / BCRC 14619 / CIP 102991 / JCM 1131 / KCTC 3163 / NCIMB 11718 / NCTC 13722 / AM63).